A 182-amino-acid polypeptide reads, in one-letter code: ATP-dependent protease subunit HslV (182 aa).

Thr-6 is a catalytic residue. Ala-164, Cys-167, and Thr-170 together coordinate Na(+).

This sequence belongs to the peptidase T1B family. HslV subfamily. As to quaternary structure, a double ring-shaped homohexamer of HslV is capped on each side by a ring-shaped HslU homohexamer. The assembly of the HslU/HslV complex is dependent on binding of ATP.

Its subcellular location is the cytoplasm. It carries out the reaction ATP-dependent cleavage of peptide bonds with broad specificity.. Allosterically activated by HslU binding. Its function is as follows. Protease subunit of a proteasome-like degradation complex believed to be a general protein degrading machinery. The protein is ATP-dependent protease subunit HslV of Borrelia garinii subsp. bavariensis (strain ATCC BAA-2496 / DSM 23469 / PBi) (Borreliella bavariensis).